We begin with the raw amino-acid sequence, 355 residues long: Protein-glutamate methylesterase/protein-glutamine glutaminase 3 (355 aa).

Residues 8–123 enclose the Response regulatory domain; that stretch reads SVLIVDDSGM…AREVEDFVDK (116 aa). Position 59 is a 4-aspartylphosphate (Asp-59). The segment at 139–161 is disordered; that stretch reads RSAPAAGPTPVPQAPPPPAAPPA. A compositionally biased stretch (pro residues) spans 145-159; that stretch reads GPTPVPQAPPPPAAP. A CheB-type methylesterase domain is found at 160–350; the sequence is PAGDGGIIAI…ASLLEITGAS (191 aa). Active-site residues include Ser-172, His-199, and Asp-292.

The protein belongs to the CheB family. Phosphorylated by CheA. Phosphorylation of the N-terminal regulatory domain activates the methylesterase activity.

It localises to the cytoplasm. It carries out the reaction [protein]-L-glutamate 5-O-methyl ester + H2O = L-glutamyl-[protein] + methanol + H(+). The enzyme catalyses L-glutaminyl-[protein] + H2O = L-glutamyl-[protein] + NH4(+). Involved in chemotaxis. Part of a chemotaxis signal transduction system that modulates chemotaxis in response to various stimuli. Catalyzes the demethylation of specific methylglutamate residues introduced into the chemoreceptors (methyl-accepting chemotaxis proteins or MCP) by CheR. Also mediates the irreversible deamidation of specific glutamine residues to glutamic acid. The polypeptide is Protein-glutamate methylesterase/protein-glutamine glutaminase 3 (Paramagnetospirillum magneticum (strain ATCC 700264 / AMB-1) (Magnetospirillum magneticum)).